Reading from the N-terminus, the 142-residue chain is Transcriptional regulator MraZ (142 aa).

2 SpoVT-AbrB domains span residues 5-51 (ASAL…PRPE) and 77-120 (AMDV…DSQT).

It belongs to the MraZ family. As to quaternary structure, forms oligomers.

The protein resides in the cytoplasm. Its subcellular location is the nucleoid. The protein is Transcriptional regulator MraZ of Burkholderia multivorans (strain ATCC 17616 / 249).